Consider the following 343-residue polypeptide: S-adenosylmethionine:tRNA ribosyltransferase-isomerase (343 aa).

This sequence belongs to the QueA family. Monomer.

Its subcellular location is the cytoplasm. The catalysed reaction is 7-aminomethyl-7-carbaguanosine(34) in tRNA + S-adenosyl-L-methionine = epoxyqueuosine(34) in tRNA + adenine + L-methionine + 2 H(+). The protein operates within tRNA modification; tRNA-queuosine biosynthesis. Functionally, transfers and isomerizes the ribose moiety from AdoMet to the 7-aminomethyl group of 7-deazaguanine (preQ1-tRNA) to give epoxyqueuosine (oQ-tRNA). In Geobacter sulfurreducens (strain ATCC 51573 / DSM 12127 / PCA), this protein is S-adenosylmethionine:tRNA ribosyltransferase-isomerase.